Here is a 257-residue protein sequence, read N- to C-terminus: tRNA dimethylallyltransferase (257 aa).

15–22 is a binding site for ATP; the sequence is GPTASGKS. 17–22 is a binding site for substrate; the sequence is TASGKS.

It belongs to the IPP transferase family. In terms of assembly, monomer. The cofactor is Mg(2+).

It carries out the reaction adenosine(37) in tRNA + dimethylallyl diphosphate = N(6)-dimethylallyladenosine(37) in tRNA + diphosphate. Catalyzes the transfer of a dimethylallyl group onto the adenine at position 37 in tRNAs that read codons beginning with uridine, leading to the formation of N6-(dimethylallyl)adenosine (i(6)A). This Oenococcus oeni (strain ATCC BAA-331 / PSU-1) protein is tRNA dimethylallyltransferase.